Consider the following 160-residue polypeptide: Myosin catalytic light chain LC-1, mantle muscle (160 aa).

Xaa-1 carries the blocked amino end (Xaa) modification. EF-hand domains lie at Asp-7–Asn-44, Thr-83–Arg-118, and Ile-119–Gly-153.

Functionally, in molluscan muscle, calcium regulation is associated with myosin rather than with actin. Muscle myosin contains two types of light chains: the catalytic light chain, essential for ATPase activity, and the regulatory light chain, a calcium-binding protein responsible for Ca(2+) dependent binding and Ca(2+) dependent Mg-ATPase activity. This chain is Myosin catalytic light chain LC-1, mantle muscle, found in Todarodes pacificus (Japanese flying squid).